Consider the following 70-residue polypeptide: Cytochrome c oxidase subunit 8B, mitochondrial (70 aa).

The N-terminal 24 residues, 1–24 (MPRLPPALRLLQPPLRCWVVPKLH), are a transit peptide targeting the mitochondrion. Topologically, residues 25–35 (VSAKPARTPTS) are mitochondrial matrix. Residues 36-59 (PAEQAVGLSMMFLSFLVPAGWVLS) form a helical membrane-spanning segment. The Mitochondrial intermembrane segment spans residues 60-70 (HLESYKKSSTA).

Belongs to the cytochrome c oxidase VIII family. Component of the cytochrome c oxidase (complex IV, CIV), a multisubunit enzyme composed of 14 subunits. The complex is composed of a catalytic core of 3 subunits MT-CO1, MT-CO2 and MT-CO3, encoded in the mitochondrial DNA, and 11 supernumerary subunits COX4I, COX5A, COX5B, COX6A, COX6B, COX6C, COX7A, COX7B, COX7C, COX8 and NDUFA4, which are encoded in the nuclear genome. The complex exists as a monomer or a dimer and forms supercomplexes (SCs) in the inner mitochondrial membrane with NADH-ubiquinone oxidoreductase (complex I, CI) and ubiquinol-cytochrome c oxidoreductase (cytochrome b-c1 complex, complex III, CIII), resulting in different assemblies (supercomplex SCI(1)III(2)IV(1) and megacomplex MCI(2)III(2)IV(2)).

It is found in the mitochondrion inner membrane. Its pathway is energy metabolism; oxidative phosphorylation. Component of the cytochrome c oxidase, the last enzyme in the mitochondrial electron transport chain which drives oxidative phosphorylation. The respiratory chain contains 3 multisubunit complexes succinate dehydrogenase (complex II, CII), ubiquinol-cytochrome c oxidoreductase (cytochrome b-c1 complex, complex III, CIII) and cytochrome c oxidase (complex IV, CIV), that cooperate to transfer electrons derived from NADH and succinate to molecular oxygen, creating an electrochemical gradient over the inner membrane that drives transmembrane transport and the ATP synthase. Cytochrome c oxidase is the component of the respiratory chain that catalyzes the reduction of oxygen to water. Electrons originating from reduced cytochrome c in the intermembrane space (IMS) are transferred via the dinuclear copper A center (CU(A)) of subunit 2 and heme A of subunit 1 to the active site in subunit 1, a binuclear center (BNC) formed by heme A3 and copper B (CU(B)). The BNC reduces molecular oxygen to 2 water molecules using 4 electrons from cytochrome c in the IMS and 4 protons from the mitochondrial matrix. The chain is Cytochrome c oxidase subunit 8B, mitochondrial (COX8B) from Eulemur fulvus fulvus (Brown lemur).